A 157-amino-acid polypeptide reads, in one-letter code: Small ribosomal subunit protein uS7 (157 aa).

It belongs to the universal ribosomal protein uS7 family. As to quaternary structure, part of the 30S ribosomal subunit. Contacts proteins S9 and S11.

Functionally, one of the primary rRNA binding proteins, it binds directly to 16S rRNA where it nucleates assembly of the head domain of the 30S subunit. Is located at the subunit interface close to the decoding center, probably blocks exit of the E-site tRNA. The protein is Small ribosomal subunit protein uS7 of Francisella philomiragia subsp. philomiragia (strain ATCC 25017 / CCUG 19701 / FSC 153 / O#319-036).